The primary structure comprises 1128 residues: Apoptosis-stimulating of p53 protein 2 (1128 aa).

Disordered stretches follow at residues 86–106 and 322–341; these read PGRD…RNGV and KENL…ASAP. Over residues 322–339 the composition is skewed to polar residues; it reads KENLPVSSDGNLPQQAAS. The interval 332 to 348 is interaction with APPBP1; that stretch reads NLPQQAASAPSRVAAVG. Phosphoserine is present on Ser-480. 2 disordered regions span residues 494–598 and 655–706; these read NVAK…LPPF and NQQQ…LPFL. Polar residues predominate over residues 528–537; the sequence is GSSQQLSTVV. 4 positions are modified to phosphoserine: Ser-556, Ser-569, Ser-572, and Ser-576. Residues 558-575 show a composition bias toward polar residues; the sequence is SIPSVGQDQTLSPGSKQE. A compositionally biased stretch (polar residues) spans 655–670; it reads NQQQHPENIYSNSQGK. 3 positions are modified to phosphoserine: Ser-698, Ser-714, and Ser-737. 2 disordered regions span residues 724 to 748 and 802 to 909; these read KLSN…NGPN and SLVP…TNLR. The segment covering 840–849 has biased composition (low complexity); that stretch reads NSPNLQNNPE. The SH3-binding motif lies at 866-875; it reads YPPYPPPPYP. Positions 867–876 are enriched in pro residues; that stretch reads PPYPPPPYPS. Residues 876–1128 are mediates interaction with APC2; the sequence is SGEPEGPGED…RIKPRQRSLA (253 aa). ANK repeat units lie at residues 926–957, 958–990, 991–1024, and 1025–1067; these read PLAL…LPND, EGIT…AADS, DGWT…MTYS, and DMQT…ALWD. One can recognise an SH3 domain in the interval 1057–1119; that stretch reads MNKGVIYALW…PRNLLGLYPR (63 aa).

Belongs to the ASPP family. Interacts with P53/TP53; the interaction promotes pro-apoptotic activity. Interacts with BCL2. Interacts with protein phosphatase 1. Interacts with RELA NF-kappa-B subunit. This interaction probably prevents the activation of apoptosis, possibly by preventing its interaction with TP53. Interacts with APC2 and NAE1. Interacts with DDX42 (via the C-terminus); the interaction is not inhibited by TP53BP2 ubiquitination and is independent of p53/TP53. In terms of tissue distribution, widely expressed. Expressed in spleen, thymus, prostate, testis, ovary, small intestine, colon and peripheral blood leukocyte. Reduced expression in breast carcinomas expressing a wild-type TP53 protein. Overexpressed in lung cancer cell lines.

Its subcellular location is the cytoplasm. The protein resides in the perinuclear region. It is found in the nucleus. In terms of biological role, regulator that plays a central role in regulation of apoptosis and cell growth via its interactions with proteins such as TP53. Regulates TP53 by enhancing the DNA binding and transactivation function of TP53 on the promoters of proapoptotic genes in vivo. Inhibits the ability of NAE1 to conjugate NEDD8 to CUL1, and thereby decreases NAE1 ability to induce apoptosis. Impedes cell cycle progression at G2/M. Its apoptosis-stimulating activity is inhibited by its interaction with DDX42. This is Apoptosis-stimulating of p53 protein 2 (TP53BP2) from Homo sapiens (Human).